The following is a 544-amino-acid chain: Esterase-6 (544 aa).

The signal sequence occupies residues 1-21 (MNYVGLGLIIVLSCLWLGSNA). N42 carries an N-linked (GlcNAc...) asparagine glycan. The cysteines at positions 86 and 105 are disulfide-linked. Residue S209 is the Acyl-ester intermediate of the active site. C261 and C273 are joined by a disulfide. Residues N420 and N456 are each glycosylated (N-linked (GlcNAc...) asparagine). The active-site Charge relay system is H466. N-linked (GlcNAc...) asparagine glycosylation is present at N506. An intrachain disulfide couples C514 to C535.

This sequence belongs to the type-B carboxylesterase/lipase family. As to quaternary structure, monomer. In terms of tissue distribution, specifically expressed in the ejaculatory bulbs of male.

It localises to the secreted. It catalyses the reaction a carboxylic ester + H2O = an alcohol + a carboxylate + H(+). In terms of biological role, transferred from the ejaculatory bulbs of males to the female genitals upon copulation, plays an important role in the reproductive biology. This chain is Esterase-6 (Est-6), found in Drosophila melanogaster (Fruit fly).